The sequence spans 341 residues: UDP-3-O-acylglucosamine N-acyltransferase (341 aa).

His241 acts as the Proton acceptor in catalysis.

Belongs to the transferase hexapeptide repeat family. LpxD subfamily. As to quaternary structure, homotrimer.

It carries out the reaction a UDP-3-O-[(3R)-3-hydroxyacyl]-alpha-D-glucosamine + a (3R)-hydroxyacyl-[ACP] = a UDP-2-N,3-O-bis[(3R)-3-hydroxyacyl]-alpha-D-glucosamine + holo-[ACP] + H(+). Its pathway is bacterial outer membrane biogenesis; LPS lipid A biosynthesis. Catalyzes the N-acylation of UDP-3-O-acylglucosamine using 3-hydroxyacyl-ACP as the acyl donor. Is involved in the biosynthesis of lipid A, a phosphorylated glycolipid that anchors the lipopolysaccharide to the outer membrane of the cell. In Haemophilus ducreyi (strain 35000HP / ATCC 700724), this protein is UDP-3-O-acylglucosamine N-acyltransferase.